Consider the following 358-residue polypeptide: Pre-mRNA-splicing factor spp2 (358 aa).

Disordered stretches follow at residues 1–250 (MTDQ…RAVP) and 298–358 (AWNQ…RGDR). Over residues 24 to 40 (KTKKPSRPTHTRRHHAR) the composition is skewed to basic residues. Composition is skewed to basic and acidic residues over residues 80–137 (LENR…DASR) and 145–160 (RSRD…KDLQ). Residues 174 to 185 (NPKSTTTATSSF) show a composition bias toward polar residues. Basic and acidic residues-rich tracts occupy residues 233 to 246 (SSHD…HSDY) and 309 to 358 (GDSR…RGDR).

The protein belongs to the SPP2 family. In terms of assembly, associated with the spliceosome.

The protein localises to the nucleus. Involved in spliceosome maturation and the first step of pre-mRNA splicing. This is Pre-mRNA-splicing factor spp2 (msp-40) from Neurospora crassa (strain ATCC 24698 / 74-OR23-1A / CBS 708.71 / DSM 1257 / FGSC 987).